A 430-amino-acid polypeptide reads, in one-letter code: Protein arginine methyltransferase NDUFAF7, mitochondrial (430 aa).

The transit peptide at 1-31 directs the protein to the mitochondrion; the sequence is MSGLARLRKTAFLMVSASANCRIQRYQSSRT.

Belongs to the NDUFAF7 family.

It localises to the mitochondrion. It catalyses the reaction L-arginyl-[protein] + 2 S-adenosyl-L-methionine = N(omega),N(omega)'-dimethyl-L-arginyl-[protein] + 2 S-adenosyl-L-homocysteine + 2 H(+). In terms of biological role, arginine methyltransferase involved in the assembly or stability of mitochondrial NADH:ubiquinone oxidoreductase complex (complex I). Acts by mediating symmetric dimethylation of 'Arg-118' of ndufs2 after it assembles into the complex I, stabilizing the early intermediate complex. In Xenopus tropicalis (Western clawed frog), this protein is Protein arginine methyltransferase NDUFAF7, mitochondrial.